The following is a 204-amino-acid chain: Urease accessory protein UreG (204 aa).

11 to 18 (GPVGAGKT) contributes to the GTP binding site.

It belongs to the SIMIBI class G3E GTPase family. UreG subfamily. As to quaternary structure, homodimer. UreD, UreF and UreG form a complex that acts as a GTP-hydrolysis-dependent molecular chaperone, activating the urease apoprotein by helping to assemble the nickel containing metallocenter of UreC. The UreE protein probably delivers the nickel.

Its subcellular location is the cytoplasm. In terms of biological role, facilitates the functional incorporation of the urease nickel metallocenter. This process requires GTP hydrolysis, probably effectuated by UreG. In Staphylococcus epidermidis (strain ATCC 12228 / FDA PCI 1200), this protein is Urease accessory protein UreG.